We begin with the raw amino-acid sequence, 210 residues long: uncharacterized protein (210 aa).

The N-terminal stretch at 1-17 is a signal peptide; sequence MKRTAVSLCLLTGLLSG. Cys18 carries the N-palmitoyl cysteine lipid modification. The S-diacylglycerol cysteine moiety is linked to residue Cys18. The segment covering 176–195 has biased composition (polar residues); the sequence is EMKTSPQGSPVSENENANGE. A disordered region spans residues 176-210; the sequence is EMKTSPQGSPVSENENANGETRQDMKIDRNDKNAR. Residues 196–210 show a composition bias toward basic and acidic residues; that stretch reads TRQDMKIDRNDKNAR.

Its subcellular location is the cell membrane. This is an uncharacterized protein from Bacillus subtilis (strain 168).